The primary structure comprises 150 residues: UPF0506 protein SJCHGC09643 (150 aa).

Residues 1-18 (MNTCIQLLILCLVTVINS) form the signal peptide. N20, N32, N48, and N110 each carry an N-linked (GlcNAc...) asparagine glycan. 3 cysteine pairs are disulfide-bonded: C116-C130, C123-C134, and C129-C139.

This sequence belongs to the UPF0506 family.

It is found in the secreted. The sequence is that of UPF0506 protein SJCHGC09643 from Schistosoma japonicum (Blood fluke).